The following is a 246-amino-acid chain: Probable transcriptional regulatory protein CLK_2466 (246 aa).

This sequence belongs to the TACO1 family.

The protein localises to the cytoplasm. This is Probable transcriptional regulatory protein CLK_2466 from Clostridium botulinum (strain Loch Maree / Type A3).